A 100-amino-acid chain; its full sequence is Large ribosomal subunit protein bL28 (100 aa).

This sequence belongs to the bacterial ribosomal protein bL28 family.

This Ehrlichia chaffeensis (strain ATCC CRL-10679 / Arkansas) protein is Large ribosomal subunit protein bL28.